The following is a 150-amino-acid chain: Transcriptional repressor NrdR (150 aa).

The segment at 3-34 (CPFCHHPQSRVIDSRTVENGFVTRRRRQCTKC) is a zinc-finger region. In terms of domain architecture, ATP-cone spans 46-136 (LLVEKRNGVT…VYKSFSSMED (91 aa)).

The protein belongs to the NrdR family. Zn(2+) serves as cofactor.

Its function is as follows. Negatively regulates transcription of bacterial ribonucleotide reductase nrd genes and operons by binding to NrdR-boxes. This Corynebacterium kroppenstedtii (strain DSM 44385 / JCM 11950 / CIP 105744 / CCUG 35717) protein is Transcriptional repressor NrdR.